A 261-amino-acid polypeptide reads, in one-letter code: MLLIPAIDLKDGHCVRLKQGDMDQATVFSEDPAEMARHWLLQGARRLHLVDLNGAFAGKPKNESAVKSILQAVREYAEKNGIEEIPVQLGGGIRDLDTIERYLDDGLSYIIIGTAAVKNPGFLHDACSAFPGQIIVGLDAKDGKVATDGWSKLSGHEVIDLAKKFEDYGCESIIYTDIGRDGMMGGVNIEATVKLAQSMTIPVIASGGVHNIKDVEALCAVQDEGIEGVICGRSIYEGTLDLRSAQDRADELTDEAPEADA.

The active-site Proton acceptor is the Asp8. Asp139 (proton donor) is an active-site residue.

Belongs to the HisA/HisF family.

It is found in the cytoplasm. The catalysed reaction is 1-(5-phospho-beta-D-ribosyl)-5-[(5-phospho-beta-D-ribosylamino)methylideneamino]imidazole-4-carboxamide = 5-[(5-phospho-1-deoxy-D-ribulos-1-ylimino)methylamino]-1-(5-phospho-beta-D-ribosyl)imidazole-4-carboxamide. It participates in amino-acid biosynthesis; L-histidine biosynthesis; L-histidine from 5-phospho-alpha-D-ribose 1-diphosphate: step 4/9. The protein is 1-(5-phosphoribosyl)-5-[(5-phosphoribosylamino)methylideneamino] imidazole-4-carboxamide isomerase of Janthinobacterium sp. (strain Marseille) (Minibacterium massiliensis).